A 180-amino-acid chain; its full sequence is Small ribosomal subunit protein uS4 (180 aa).

The region spanning 103-174 is the S4 RNA-binding domain; it reads RRLQTIVYKK…HPERMMIEKA (72 aa).

Belongs to the universal ribosomal protein uS4 family. Part of the 30S ribosomal subunit. Contacts protein S5. The interaction surface between S4 and S5 is involved in control of translational fidelity.

One of the primary rRNA binding proteins, it binds directly to 16S rRNA where it nucleates assembly of the body of the 30S subunit. Its function is as follows. With S5 and S12 plays an important role in translational accuracy. In Pyrococcus abyssi (strain GE5 / Orsay), this protein is Small ribosomal subunit protein uS4.